A 231-amino-acid chain; its full sequence is Inner membrane protein YohK (231 aa).

Residue M1 is a topological domain, periplasmic. The helical transmembrane segment at 2-22 threads the bilayer; the sequence is MANIWWSLPLTLIVFFAARKL. Residues 23-29 are Cytoplasmic-facing; sequence AARYKFP. The helical transmembrane segment at 30 to 50 threads the bilayer; the sequence is LLNPLLVAMVVIIPFLMLTGI. At 51-90 the chain is on the periplasmic side; it reads SYDSYFKGSEVLNDLLQPAVVALAYPLYEQLHQIRARWKS. Residues 91–111 traverse the membrane as a helical segment; it reads IITICFIGSVVAMVTGTSVAL. The Cytoplasmic segment spans residues 112–118; sequence LMGASPE. The next 2 helical transmembrane spans lie at 119 to 139 and 140 to 160; these read IAAS…VGGS and IGGI…LGAV. Residues 161–208 are Cytoplasmic-facing; sequence FGHTLLNAMRIRTKAARGLAMGTASHALGTARCAELDYQEGAFSSLAL. Residues 209 to 229 traverse the membrane as a helical segment; that stretch reads VLCGIITSLIAPFLFPIILAV. Residues 230 to 231 are Periplasmic-facing; that stretch reads MG.

This sequence belongs to the YohK (E.coli)/YwbG (IPA-22R) (B.subtilis) family.

It is found in the cell inner membrane. The polypeptide is Inner membrane protein YohK (yohK) (Escherichia coli (strain K12)).